The following is a 186-amino-acid chain: ADP-ribosylation factor-like protein 8B-A (186 aa).

An intramembrane region (note=Mediates targeting to membranes) is located at residues 1–19; it reads MLALINRLLDWFKSLFWKE. GTP contacts are provided by residues 29–35, 71–75, and 130–133; these read QYSGKTT, DIGGQ, and NKRD.

The protein belongs to the small GTPase superfamily. Arf family.

Its subcellular location is the late endosome membrane. The protein localises to the lysosome membrane. The protein resides in the cytoplasm. It is found in the cytoskeleton. It localises to the spindle. Its subcellular location is the early endosome membrane. Small GTPase which cycles between active GTP-bound and inactive GDP-bound states. In its active state, binds to a variety of effector proteins playing a key role in the regulation of lysosomal positioning which is important for nutrient sensing, natural killer cell-mediated cytotoxicity and antigen presentation. Along with its effectors, orchestrates lysosomal transport and fusion. This is ADP-ribosylation factor-like protein 8B-A (arl8ba) from Danio rerio (Zebrafish).